Reading from the N-terminus, the 763-residue chain is MTLTSTLGYPRVGPHRELKAALETYWRDGEEAPLLDTAKSLRRASWRLQKEHGIGHIPSNDFTLYDHVLDTICMTGAVPERFAAGAEIDLATYFAMARGAQDGTRDVAAMEMTKWFDTNYHYIVPEFSPETNFRLAFTKAIDEFAEAKALGVHTRPVLVGPFSFLKLGKATVAGFDPLDLMGRLLPVYENVLKRLAEAGADWVQIDEPCLVLELGSGDLAKCRAAYSALSAAAPSLKLMVATYFGALPEASLETAMALPVAGIHLDMVRGRSQYEAALSALPRDKLLSLGLVDGRNIWRTDMEAALTLAERAVLTLGPKRVMISAACSLLHVPFSLAGEKSLDPELKSWLAFAEEKLGELAVLARGVKEGRTSISTELAENAALFEARRNSPRIHNPAVRARVRDIDPHADRRGRPFADRQSIQQKRFGLPKLPTTTIGSFPQTSDVRKARASLRRGDWNEAQYDAFMKAEIEKTIRLQERIGLDVLVHGEPERTDMVEYFGEKLEGFAFTSLGWVQSYGSRCVKPPIIFGDVSRPEPMTVEWSRYAQSLTDRPVKGMLTGPVTILQWSFVRDDQPRSETCRQIALAIRDEVYDLEAAGLGMIQIDEPALREGLPLHRSEWDTYLRWACECFRLSVCVARDETQIHTHMCYSEFNDIIEAIADLDADVISIETSRSRMELLDAFVDFSYPNDIGPGVYDIHSPRVPARGEMLSLLRLAAERLPSERIWVNPDCGLKTRGWPETEAALVEMVEAARELRNAIGA.

Residues 16–19 (RELK) and K114 contribute to the 5-methyltetrahydropteroyltri-L-glutamate site. L-homocysteine is bound by residues 438–440 (IGS) and E491. L-methionine-binding positions include 438–440 (IGS) and E491. 5-methyltetrahydropteroyltri-L-glutamate is bound by residues 522-523 (RC) and W568. D606 lines the L-homocysteine pocket. An L-methionine-binding site is contributed by D606. E612 serves as a coordination point for 5-methyltetrahydropteroyltri-L-glutamate. 3 residues coordinate Zn(2+): H648, C650, and E672. H701 acts as the Proton donor in catalysis. C733 is a Zn(2+) binding site.

It belongs to the vitamin-B12 independent methionine synthase family. Zn(2+) is required as a cofactor.

The catalysed reaction is 5-methyltetrahydropteroyltri-L-glutamate + L-homocysteine = tetrahydropteroyltri-L-glutamate + L-methionine. Its pathway is amino-acid biosynthesis; L-methionine biosynthesis via de novo pathway; L-methionine from L-homocysteine (MetE route): step 1/1. Its function is as follows. Catalyzes the transfer of a methyl group from 5-methyltetrahydrofolate to homocysteine resulting in methionine formation. This Parvibaculum lavamentivorans (strain DS-1 / DSM 13023 / NCIMB 13966) protein is 5-methyltetrahydropteroyltriglutamate--homocysteine methyltransferase.